The following is a 121-amino-acid chain: Large ribosomal subunit protein uL14 (121 aa).

It belongs to the universal ribosomal protein uL14 family. In terms of assembly, part of the 50S ribosomal subunit. Forms a cluster with proteins L3 and L19. In the 70S ribosome, L14 and L19 interact and together make contacts with the 16S rRNA in bridges B5 and B8.

Binds to 23S rRNA. Forms part of two intersubunit bridges in the 70S ribosome. The sequence is that of Large ribosomal subunit protein uL14 from Synechococcus sp. (strain CC9311).